The primary structure comprises 344 residues: Holliday junction branch migration complex subunit RuvB (344 aa).

Residues 1 to 182 (MRIEALNTAP…FGINSRLDYY (182 aa)) form a large ATPase domain (RuvB-L) region. ATP contacts are provided by residues I21, R22, G63, K66, T67, T68, 129-131 (EDY), R172, Y182, and R219. T67 is a Mg(2+) binding site. A small ATPAse domain (RuvB-S) region spans residues 183–253 (NPELLQSIII…VARRTLESLE (71 aa)). Residues 256–344 (EGGLDDMDKK…GSLFDTAEDG (89 aa)) form a head domain (RuvB-H) region. DNA-binding residues include R311 and R316.

It belongs to the RuvB family. As to quaternary structure, homohexamer. Forms an RuvA(8)-RuvB(12)-Holliday junction (HJ) complex. HJ DNA is sandwiched between 2 RuvA tetramers; dsDNA enters through RuvA and exits via RuvB. An RuvB hexamer assembles on each DNA strand where it exits the tetramer. Each RuvB hexamer is contacted by two RuvA subunits (via domain III) on 2 adjacent RuvB subunits; this complex drives branch migration. In the full resolvosome a probable DNA-RuvA(4)-RuvB(12)-RuvC(2) complex forms which resolves the HJ.

The protein localises to the cytoplasm. It carries out the reaction ATP + H2O = ADP + phosphate + H(+). In terms of biological role, the RuvA-RuvB-RuvC complex processes Holliday junction (HJ) DNA during genetic recombination and DNA repair, while the RuvA-RuvB complex plays an important role in the rescue of blocked DNA replication forks via replication fork reversal (RFR). RuvA specifically binds to HJ cruciform DNA, conferring on it an open structure. The RuvB hexamer acts as an ATP-dependent pump, pulling dsDNA into and through the RuvAB complex. RuvB forms 2 homohexamers on either side of HJ DNA bound by 1 or 2 RuvA tetramers; 4 subunits per hexamer contact DNA at a time. Coordinated motions by a converter formed by DNA-disengaged RuvB subunits stimulates ATP hydrolysis and nucleotide exchange. Immobilization of the converter enables RuvB to convert the ATP-contained energy into a lever motion, pulling 2 nucleotides of DNA out of the RuvA tetramer per ATP hydrolyzed, thus driving DNA branch migration. The RuvB motors rotate together with the DNA substrate, which together with the progressing nucleotide cycle form the mechanistic basis for DNA recombination by continuous HJ branch migration. Branch migration allows RuvC to scan DNA until it finds its consensus sequence, where it cleaves and resolves cruciform DNA. The polypeptide is Holliday junction branch migration complex subunit RuvB (Chlorobaculum tepidum (strain ATCC 49652 / DSM 12025 / NBRC 103806 / TLS) (Chlorobium tepidum)).